A 154-amino-acid chain; its full sequence is Peptide deformylase (154 aa).

Fe cation is bound by residues Cys-90 and His-132. Glu-133 is an active-site residue. His-136 contributes to the Fe cation binding site.

Belongs to the polypeptide deformylase family. Requires Fe(2+) as cofactor.

The catalysed reaction is N-terminal N-formyl-L-methionyl-[peptide] + H2O = N-terminal L-methionyl-[peptide] + formate. Functionally, removes the formyl group from the N-terminal Met of newly synthesized proteins. Requires at least a dipeptide for an efficient rate of reaction. N-terminal L-methionine is a prerequisite for activity but the enzyme has broad specificity at other positions. The chain is Peptide deformylase from Halothermothrix orenii (strain H 168 / OCM 544 / DSM 9562).